We begin with the raw amino-acid sequence, 218 residues long: Probable transaldolase (218 aa).

Lys87 serves as the catalytic Schiff-base intermediate with substrate.

This sequence belongs to the transaldolase family. Type 3B subfamily.

It is found in the cytoplasm. It carries out the reaction D-sedoheptulose 7-phosphate + D-glyceraldehyde 3-phosphate = D-erythrose 4-phosphate + beta-D-fructose 6-phosphate. It functions in the pathway carbohydrate degradation; pentose phosphate pathway; D-glyceraldehyde 3-phosphate and beta-D-fructose 6-phosphate from D-ribose 5-phosphate and D-xylulose 5-phosphate (non-oxidative stage): step 2/3. In terms of biological role, transaldolase is important for the balance of metabolites in the pentose-phosphate pathway. In Parabacteroides distasonis (strain ATCC 8503 / DSM 20701 / CIP 104284 / JCM 5825 / NCTC 11152), this protein is Probable transaldolase.